Reading from the N-terminus, the 801-residue chain is Elongation factor G, mitochondrial (801 aa).

The N-terminal 65 residues, Met1 to Gln65, are a transit peptide targeting the mitochondrion. A tr-type G domain is found at Ser100–Ser387. Residues Ala109–Thr116, Asp185–His189, and Asn239–Asp242 contribute to the GTP site.

Belongs to the TRAFAC class translation factor GTPase superfamily. Classic translation factor GTPase family. EF-G/EF-2 subfamily.

It localises to the mitochondrion. It participates in protein biosynthesis; polypeptide chain elongation. Mitochondrial GTPase that catalyzes the GTP-dependent ribosomal translocation step during translation elongation. During this step, the ribosome changes from the pre-translocational (PRE) to the post-translocational (POST) state as the newly formed A-site-bound peptidyl-tRNA and P-site-bound deacylated tRNA move to the P and E sites, respectively. Catalyzes the coordinated movement of the two tRNA molecules, the mRNA and conformational changes in the ribosome. This is Elongation factor G, mitochondrial (mef1) from Pyrenophora tritici-repentis (strain Pt-1C-BFP) (Wheat tan spot fungus).